A 227-amino-acid chain; its full sequence is 2,3-bisphosphoglycerate-dependent phosphoglycerate mutase (227 aa).

Substrate contacts are provided by residues 7 to 14, 20 to 21, Arg-59, 86 to 89, Lys-97, 113 to 114, and 182 to 183; these read RHGFSEWN, TG, ERHY, RR, and GN. Residue His-8 is the Tele-phosphohistidine intermediate of the active site. The Proton donor/acceptor role is filled by Glu-86.

It belongs to the phosphoglycerate mutase family. BPG-dependent PGAM subfamily. In terms of assembly, homodimer.

The catalysed reaction is (2R)-2-phosphoglycerate = (2R)-3-phosphoglycerate. The protein operates within carbohydrate degradation; glycolysis; pyruvate from D-glyceraldehyde 3-phosphate: step 3/5. Its function is as follows. Catalyzes the interconversion of 2-phosphoglycerate and 3-phosphoglycerate. This chain is 2,3-bisphosphoglycerate-dependent phosphoglycerate mutase, found in Histophilus somni (strain 129Pt) (Haemophilus somnus).